The chain runs to 398 residues: Succinate--CoA ligase [ADP-forming] subunit beta (398 aa).

The region spanning 9 to 254 is the ATP-grasp domain; the sequence is KAVLREFGVP…ETEEDAKEIE (246 aa). Residues Lys46, 53–55, Glu109, Ser112, and Glu117 contribute to the ATP site; that span reads GRG. Residues Asn209 and Asp223 each coordinate Mg(2+). Substrate contacts are provided by residues Asn274 and 331–333; that span reads GIM.

Belongs to the succinate/malate CoA ligase beta subunit family. As to quaternary structure, heterotetramer of two alpha and two beta subunits. It depends on Mg(2+) as a cofactor.

The catalysed reaction is succinate + ATP + CoA = succinyl-CoA + ADP + phosphate. It carries out the reaction GTP + succinate + CoA = succinyl-CoA + GDP + phosphate. It participates in carbohydrate metabolism; tricarboxylic acid cycle; succinate from succinyl-CoA (ligase route): step 1/1. Its function is as follows. Succinyl-CoA synthetase functions in the citric acid cycle (TCA), coupling the hydrolysis of succinyl-CoA to the synthesis of either ATP or GTP and thus represents the only step of substrate-level phosphorylation in the TCA. The beta subunit provides nucleotide specificity of the enzyme and binds the substrate succinate, while the binding sites for coenzyme A and phosphate are found in the alpha subunit. This chain is Succinate--CoA ligase [ADP-forming] subunit beta, found in Rhodopseudomonas palustris (strain ATCC BAA-98 / CGA009).